A 599-amino-acid chain; its full sequence is Glucose-6-phosphate 1-dehydrogenase 3, chloroplastic (599 aa).

Residues M1–P18 show a composition bias toward low complexity. Positions M1–H23 are disordered. A chloroplast-targeting transit peptide spans M1–S66. V67 bears the N-acetylvaline mark. NADP(+)-binding positions include G119–K126 and R153. A disulfide bridge connects residues C171 and C179. K256 serves as a coordination point for NADP(+). D-glucose 6-phosphate contacts are provided by residues K256, H286–K290, E324, and D343. H348 acts as the Proton acceptor in catalysis. K441 contacts NADP(+). Positions 444 and 449 each coordinate D-glucose 6-phosphate. R454 and R483 together coordinate NADP(+). Q485 is a binding site for D-glucose 6-phosphate. Residues Y491 to K493 and R576 contribute to the NADP(+) site.

The protein belongs to the glucose-6-phosphate dehydrogenase family. Forms homodimer. Interacts with G6PD1. In terms of tissue distribution, expressed in roots, flowers and siliques.

It is found in the plastid. It localises to the chloroplast stroma. The catalysed reaction is D-glucose 6-phosphate + NADP(+) = 6-phospho-D-glucono-1,5-lactone + NADPH + H(+). It participates in carbohydrate degradation; pentose phosphate pathway; D-ribulose 5-phosphate from D-glucose 6-phosphate (oxidative stage): step 1/3. Regulated by metabolites. Post-translationally inactivated by cysteine-mediated redox modification via the ferredoxin-thioredoxin system in the light and this avoids futile cycles with photosynthetic CO2 fixation. Functionally, catalyzes the rate-limiting step of the oxidative pentose-phosphate pathway, which represents a route for the dissimilation of carbohydrates besides glycolysis. The main function of this enzyme is to provide reducing power (NADPH) and pentose phosphates for fatty acid and nucleic acid synthesis which are involved in membrane synthesis and cell division. This Arabidopsis thaliana (Mouse-ear cress) protein is Glucose-6-phosphate 1-dehydrogenase 3, chloroplastic.